A 536-amino-acid polypeptide reads, in one-letter code: Coilin (536 aa).

The disordered stretch occupies residues 96–316 (AETCNDGAQN…QHSQSPTSDS (221 aa)). Over residues 171–180 (KTHKGKRTKK) the composition is skewed to basic residues. Positions 181-192 (KSEAPIENPPDK) are enriched in basic and acidic residues. Over residues 213–238 (QTSSSDSSDTSSCSDQPTPTTQQKPQ) the composition is skewed to low complexity. 2 stretches are compositionally biased toward polar residues: residues 239 to 257 (SSAK…THSV) and 303 to 316 (THIQ…TSDS). Repeat copies occupy residues 353-358 (RGRGRG) and 380-385 (RGRGRG). Residues 353–385 (RGRGRGEDFSWRGQRGRWFRGQGNNSNRGRGRG) form a 2 X 6 AA repeats of R-G-R-G-R-G region. The interval 368-387 (GRWFRGQGNNSNRGRGRGDS) is disordered. Positions 371–380 (FRGQGNNSNR) are enriched in low complexity. Residues 425–523 (DYSSLPLLAA…VMLNWNTLIE (99 aa)) enclose the Tudor; atypical domain.

It belongs to the coilin family. As to expression, expressed in both oocytes and somatic cells.

The protein resides in the nucleus. The sequence is that of Coilin (coil) from Xenopus laevis (African clawed frog).